The following is a 448-amino-acid chain: Asparagine--tRNA ligase (448 aa).

Belongs to the class-II aminoacyl-tRNA synthetase family. Homodimer.

The protein localises to the cytoplasm. The catalysed reaction is tRNA(Asn) + L-asparagine + ATP = L-asparaginyl-tRNA(Asn) + AMP + diphosphate + H(+). The sequence is that of Asparagine--tRNA ligase from Streptococcus agalactiae serotype Ia (strain ATCC 27591 / A909 / CDC SS700).